Reading from the N-terminus, the 576-residue chain is Rho GTPase-activating protein gacP (576 aa).

Positions 123-189 form a coiled coil; the sequence is LKSIIKTELK…RTNFERVGID (67 aa). The Rho-GAP domain maps to 277-462; sequence EDLSVLLNRE…TIIQNFDRIF (186 aa). The tract at residues 472 to 576 is disordered; the sequence is VPDTYVPPPN…DEGDAVELSD (105 aa). Low complexity predominate over residues 482–500; it reads NTRNNSVNNFNNVQPSSFS. Positions 501–513 are enriched in polar residues; that stretch reads ASTSRSINLNKST. A compositionally biased stretch (low complexity) spans 514 to 530; it reads NNPNINDDNNNNNNINN. Residues 565–576 are compositionally biased toward acidic residues; sequence SFDEGDAVELSD.

The protein localises to the cytoplasm. Functionally, rho GTPase-activating protein involved in the signal transduction pathway. The protein is Rho GTPase-activating protein gacP (gacP) of Dictyostelium discoideum (Social amoeba).